The following is a 91-amino-acid chain: MSEPDVKSHKIEFPCDDYPIKVIGDTVVGFKDTVIEILSKHAKVDLSTLAERQSKEGKYTTVQLHIVAESENQLHDINSALRATGIVKMVL.

Belongs to the UPF0250 family.

This chain is UPF0250 protein PputGB1_4855, found in Pseudomonas putida (strain GB-1).